We begin with the raw amino-acid sequence, 255 residues long: Small ribosomal subunit protein uS2 (255 aa).

The protein belongs to the universal ribosomal protein uS2 family.

The polypeptide is Small ribosomal subunit protein uS2 (Geotalea daltonii (strain DSM 22248 / JCM 15807 / FRC-32) (Geobacter daltonii)).